A 248-amino-acid chain; its full sequence is Coproheme decarboxylase (248 aa).

Fe-coproporphyrin III is bound by residues Arg130, Tyr144, 144-148 (YPMDK), Lys148, His171, Gln184, and Ser222. The active site involves Tyr144.

Belongs to the ChdC family. Type 1 subfamily. In terms of assembly, homopentamer. Fe-coproporphyrin III serves as cofactor.

The catalysed reaction is Fe-coproporphyrin III + 2 H2O2 + 2 H(+) = heme b + 2 CO2 + 4 H2O. It carries out the reaction Fe-coproporphyrin III + H2O2 + H(+) = harderoheme III + CO2 + 2 H2O. The enzyme catalyses harderoheme III + H2O2 + H(+) = heme b + CO2 + 2 H2O. The protein operates within porphyrin-containing compound metabolism; protoheme biosynthesis. Its function is as follows. Involved in coproporphyrin-dependent heme b biosynthesis. Catalyzes the decarboxylation of Fe-coproporphyrin III (coproheme) to heme b (protoheme IX), the last step of the pathway. The reaction occurs in a stepwise manner with a three-propionate harderoheme intermediate. This Geobacillus stearothermophilus (strain DSM 13240 / CIP 106956 / 10) protein is Coproheme decarboxylase.